The primary structure comprises 847 residues: uncharacterized protein (847 aa).

The span at 116 to 126 shows a compositional bias: polar residues; that stretch reads TGSSELTTSKT. 3 disordered regions span residues 116–153, 208–245, and 361–392; these read TGSSELTTSKTPIDVDTKEQENRLKQKAEAAPKSTPIE, LKNFEDKSPPQAENASSSKKDEPISVECTDETSSRLSP, and DLEKNKESSSASLSTNKLAESPTEADKNSNVI. Over residues 128–145 the composition is skewed to basic and acidic residues; sequence IDVDTKEQENRLKQKAEA. Polar residues predominate over residues 368 to 378; sequence SSSASLSTNKL.

This is an uncharacterized protein from Caenorhabditis elegans.